A 163-amino-acid chain; its full sequence is NADH-quinone oxidoreductase subunit I (163 aa).

4Fe-4S ferredoxin-type domains follow at residues 55–84 and 94–123; these read RRYPSGEERCIACKLCEAICPAQAITIEAE and TRYDIDMVKCIYCGLCQEACPVDAIVEGPN. [4Fe-4S] cluster is bound by residues Cys64, Cys67, Cys70, Cys74, Cys103, Cys106, Cys109, and Cys113.

The protein belongs to the complex I 23 kDa subunit family. As to quaternary structure, NDH-1 is composed of 14 different subunits. Subunits NuoA, H, J, K, L, M, N constitute the membrane sector of the complex. Requires [4Fe-4S] cluster as cofactor.

Its subcellular location is the cell inner membrane. The enzyme catalyses a quinone + NADH + 5 H(+)(in) = a quinol + NAD(+) + 4 H(+)(out). In terms of biological role, NDH-1 shuttles electrons from NADH, via FMN and iron-sulfur (Fe-S) centers, to quinones in the respiratory chain. The immediate electron acceptor for the enzyme in this species is believed to be ubiquinone. Couples the redox reaction to proton translocation (for every two electrons transferred, four hydrogen ions are translocated across the cytoplasmic membrane), and thus conserves the redox energy in a proton gradient. This Caulobacter vibrioides (strain ATCC 19089 / CIP 103742 / CB 15) (Caulobacter crescentus) protein is NADH-quinone oxidoreductase subunit I.